Consider the following 369-residue polypeptide: Nudix hydrolase 8 (369 aa).

The 131-residue stretch at 188–318 (SHQVGVGGFV…GDKMFKRVIE (131 aa)) folds into the Nudix hydrolase domain. The Nudix box signature appears at 225 to 246 (GFINESEEIFSGAVREVKEETG). The Mg(2+) site is built by glutamate 240 and glutamate 244.

It belongs to the Nudix hydrolase family. Mg(2+) is required as a cofactor. The cofactor is Mn(2+). In terms of tissue distribution, expressed in roots, stems and, at lower level, leaves.

Its function is as follows. Probably mediates the hydrolysis of some nucleoside diphosphate derivatives. May be involved in plant immunity and act as a positive regulator of defense response through salicylic acid (SA) signaling. The chain is Nudix hydrolase 8 (NUDT8) from Arabidopsis thaliana (Mouse-ear cress).